Consider the following 321-residue polypeptide: Tetraacyldisaccharide 4'-kinase (321 aa).

54–61 contributes to the ATP binding site; the sequence is SVGGTGKT.

It belongs to the LpxK family.

The catalysed reaction is a lipid A disaccharide + ATP = a lipid IVA + ADP + H(+). It participates in glycolipid biosynthesis; lipid IV(A) biosynthesis; lipid IV(A) from (3R)-3-hydroxytetradecanoyl-[acyl-carrier-protein] and UDP-N-acetyl-alpha-D-glucosamine: step 6/6. In terms of biological role, transfers the gamma-phosphate of ATP to the 4'-position of a tetraacyldisaccharide 1-phosphate intermediate (termed DS-1-P) to form tetraacyldisaccharide 1,4'-bis-phosphate (lipid IVA). The chain is Tetraacyldisaccharide 4'-kinase from Rickettsia africae (strain ESF-5).